A 1308-amino-acid chain; its full sequence is MATPEKWRKYLEDYIPCSFPTFLDNEGADSKSFASVLVRLEHPYGRLMSFSNNCGVDVAVVLNVAWGIVLQAYTGQDATCFAVIAESNLNIRPCRIRFTSDKVVSDILSACQSPCSEKTGDHDIPASHLSQDGGFLASEFFNTCIWGPMQGSQMTSETQAADMNRNALNLFDLVTRVEVPRVEVDKSITRITLTYKRGLMREHQALAVAKAMERAISEIISGKERLDQFCLLTSEDRRQMSLWNMNLSDNSDARIETLIHEWCRRTPSAVAVCGWDGDFSYKELNELSTGVKHDLRHLGIGPEVFVPILFEKSRWAVIAMLGVMKAGGAFILLDPAHPPKRLRSICDKVSARLVVSSVQQADLAAGLAGHVVIVGGEVATAGMAQHVGEHDDSMDCIAAPHNALYAVFTSGSTGTPKGVVNSHSSFLAAMPVYLKALELDNNSRVFQFASYAFDVTIFDALMTLVAGGCVCVLSNADRSSDLTSAIQHFGTTHLSVTPTVARILDPQDFPSLKTIVLGGELSASDELLKWVNNVRVIRLYGASECTVMSIQCTSGPASSIKTINYETGNCCWVVNPQNHEQLRPLGAVGELLVEGAVVGRGYLDDASQTSETFIEAPAWLQELRQGSSTVYKSGDLVRIAADKSVQFVCRKSTQVKLRGQRIELGEVEHHVRLAIPSATECVVELITIPDASRPPMLMAFVLSDTDASTSSITARRNATSDAVFAEPSASFRSQIASITSKLRDALPSYMVPSVILPLRIMPLTGTDKINRKLLRQLAAALSREDLQLYQAQQTTYRAPSNDIEEAFQRFFAQALGLSLDQIGADDHFFSLGGDSLTAMRLAAMARKAKFDLTVQNVFDHPELSELARHTKLVADESQEFPQPFTLIAGSKQGIVRDAARQCRLPSRVIEDVYPCTPLQKGLLAETMRDAAAFVAKIEVPLPRDVDLDRLRQAWAAVAKANPILRTRMIFSPSYGMLQVVVREDVPWIESDEVESQELVVVGRSLVQLILRRRPSTALFLHIHHAVYDGYSLPLMFAQLNNAYHGETLAFRPASAFIRYLATMPDATDYWQSMCQGLESPSFPALPHPSHRPHPDSKATHTVCVASPHAREYTPNTHVRLAWAITQAHEQGLLDVFYGTVVSGRNAPVDQIESMLIPTVATVPCRITLDVDSPVRKILHRIQDVATRGIPFEQIGLAEISHLGKDAAHACSFQTLLLMQPTAVEQNENDFFNTSTSDANYRADATYAINLFCTLENQDLSVTALYDGNIVSTDTMQRLLQNLGKSMQEIHAAPRTLIGDILKSLHSRL.

An adenylation (A) domain region spans residues 261 to 658; that stretch reads EWCRRTPSAV…CRKSTQVKLR (398 aa). The 69-residue stretch at 803-871 folds into the Carrier domain; sequence IEEAFQRFFA…ELSELARHTK (69 aa). The residue at position 835 (S835) is an O-(pantetheine 4'-phosphoryl)serine. Residues 910 to 1299 form a condensation (C) domain region; the sequence is EDVYPCTPLQ…HAAPRTLIGD (390 aa).

It belongs to the NRP synthetase family.

The protein operates within alkaloid biosynthesis; ergot alkaloid biosynthesis. Its function is as follows. D-lysergyl-peptide-synthetase subunit 2; part of the gene cluster that mediates the biosynthesis of fungal ergot alkaloid. DmaW catalyzes the first step of ergot alkaloid biosynthesis by condensing dimethylallyl diphosphate (DMAP) and tryptophan to form 4-dimethylallyl-L-tryptophan. The second step is catalyzed by the methyltransferase easF that methylates 4-dimethylallyl-L-tryptophan in the presence of S-adenosyl-L-methionine, resulting in the formation of 4-dimethylallyl-L-abrine. The catalase easC and the FAD-dependent oxidoreductase easE then transform 4-dimethylallyl-L-abrine to chanoclavine-I which is further oxidized by EasD in the presence of NAD(+), resulting in the formation of chanoclavine-I aldehyde. Agroclavine dehydrogenase easG then mediates the conversion of chanoclavine-I aldehyde to agroclavine via a non-enzymatic adduct reaction: the substrate is an iminium intermediate that is formed spontaneously from chanoclavine-I aldehyde in the presence of glutathione. The presence of easA is not required to complete this reaction. Further conversion of agroclavine to paspalic acid is a two-step process involving oxidation of agroclavine to elymoclavine and of elymoclavine to paspalic acid, the second step being performed by the elymoclavine oxidase cloA. Paspalic acid is then further converted to D-lysergic acid. Ergopeptines are assembled from D-lysergic acid and three different amino acids by the D-lysergyl-peptide-synthetases composed each of a monomudular and a trimodular nonribosomal peptide synthetase subunit. LpsB and lpsC encode the monomodular subunits responsible for D-lysergic acid activation and incorporation into the ergopeptine backbone. LpsA1 and A2 subunits encode the trimodular nonribosomal peptide synthetase assembling the tripeptide portion of ergopeptines. LpsA1 is responsible for formation of the major ergopeptine, ergotamine, and lpsA2 for alpha-ergocryptine, the minor ergopeptine of the total alkaloid mixture elaborated by C.purpurea. D-lysergyl-tripeptides are assembled by the nonribosomal peptide synthetases and released as N-(D-lysergyl-aminoacyl)-lactams. Cyclolization of the D-lysergyl-tripeptides is performed by the Fe(2+)/2-ketoglutarate-dependent dioxygenase easH which introduces a hydroxyl group into N-(D-lysergyl-aminoacyl)-lactam at alpha-C of the aminoacyl residue followed by spontaneous condensation with the terminal lactam carbonyl group. This is D-lysergyl-peptide-synthetase subunit 2 from Claviceps purpurea (Ergot fungus).